The following is a 189-amino-acid chain: Isopentenyl-diphosphate Delta-isomerase (189 aa).

Mn(2+) is bound by residues His-27 and His-34. A Nudix hydrolase domain is found at 32 to 171; that stretch reads PLHFAFSTYI…PFVFSPWMVD (140 aa). Cys-69 is an active-site residue. Position 71 (His-71) interacts with Mn(2+). Glu-89 lines the Mg(2+) pocket. The Mn(2+) site is built by Glu-119 and Glu-121. The active site involves Glu-121.

It belongs to the IPP isomerase type 1 family. Mg(2+) is required as a cofactor. Mn(2+) serves as cofactor.

Its subcellular location is the cytoplasm. The enzyme catalyses isopentenyl diphosphate = dimethylallyl diphosphate. It participates in isoprenoid biosynthesis; dimethylallyl diphosphate biosynthesis; dimethylallyl diphosphate from isopentenyl diphosphate: step 1/1. Functionally, catalyzes the 1,3-allylic rearrangement of the homoallylic substrate isopentenyl (IPP) to its highly electrophilic allylic isomer, dimethylallyl diphosphate (DMAPP). The sequence is that of Isopentenyl-diphosphate Delta-isomerase from Corynebacterium glutamicum (strain R).